Here is a 627-residue protein sequence, read N- to C-terminus: UvrABC system protein C (627 aa).

Residues 26–105 (PEPGVYFMRD…IKQHQPYFNV (80 aa)) form the GIY-YIG domain. One can recognise a UVR domain in the interval 215–250 (QELIDILSEQMEKAAEALNFEVAARIRDQIAGLKSL).

Belongs to the UvrC family. In terms of assembly, interacts with UvrB in an incision complex.

It is found in the cytoplasm. Its function is as follows. The UvrABC repair system catalyzes the recognition and processing of DNA lesions. UvrC both incises the 5' and 3' sides of the lesion. The N-terminal half is responsible for the 3' incision and the C-terminal half is responsible for the 5' incision. This is UvrABC system protein C from Trichormus variabilis (strain ATCC 29413 / PCC 7937) (Anabaena variabilis).